The sequence spans 99 residues: Putative pterin-4-alpha-carbinolamine dehydratase (99 aa).

Belongs to the pterin-4-alpha-carbinolamine dehydratase family.

It catalyses the reaction (4aS,6R)-4a-hydroxy-L-erythro-5,6,7,8-tetrahydrobiopterin = (6R)-L-erythro-6,7-dihydrobiopterin + H2O. The protein is Putative pterin-4-alpha-carbinolamine dehydratase of Bradyrhizobium sp. (strain BTAi1 / ATCC BAA-1182).